Reading from the N-terminus, the 481-residue chain is ATP synthase subunit beta (481 aa).

160-167 (GGAGVGKT) is an ATP binding site.

This sequence belongs to the ATPase alpha/beta chains family. In terms of assembly, F-type ATPases have 2 components, CF(1) - the catalytic core - and CF(0) - the membrane proton channel. CF(1) has five subunits: alpha(3), beta(3), gamma(1), delta(1), epsilon(1). CF(0) has three main subunits: a(1), b(2) and c(9-12). The alpha and beta chains form an alternating ring which encloses part of the gamma chain. CF(1) is attached to CF(0) by a central stalk formed by the gamma and epsilon chains, while a peripheral stalk is formed by the delta and b chains.

The protein resides in the cell inner membrane. It catalyses the reaction ATP + H2O + 4 H(+)(in) = ADP + phosphate + 5 H(+)(out). Produces ATP from ADP in the presence of a proton gradient across the membrane. The catalytic sites are hosted primarily by the beta subunits. The protein is ATP synthase subunit beta of Anaeromyxobacter sp. (strain Fw109-5).